A 1178-amino-acid polypeptide reads, in one-letter code: Phytochrome B (1178 aa).

A compositionally biased stretch (polar residues) spans methionine 1–serine 15. The interval methionine 1–threonine 58 is disordered. Residues histidine 23–serine 32 show a composition bias toward basic residues. Positions alanine 42–threonine 55 are enriched in gly residues. A GAF domain is found at aspartate 267 to leucine 449. Cysteine 372 is a binding site for phytochromobilin. 2 PAS domains span residues valine 668–glutamate 739 and aspartate 802–isoleucine 873. One can recognise a Histidine kinase domain in the interval tyrosine 950–arginine 1170.

Belongs to the phytochrome family. As to quaternary structure, homodimer. In terms of processing, contains one covalently linked phytochromobilin chromophore.

Regulatory photoreceptor which exists in two forms that are reversibly interconvertible by light: the Pr form that absorbs maximally in the red region of the spectrum and the Pfr form that absorbs maximally in the far-red region. Photoconversion of Pr to Pfr induces an array of morphogenic responses, whereas reconversion of Pfr to Pr cancels the induction of those responses. Pfr controls the expression of a number of nuclear genes including those encoding the small subunit of ribulose-bisphosphate carboxylase, chlorophyll A/B binding protein, protochlorophyllide reductase, rRNA, etc. It also controls the expression of its own gene(s) in a negative feedback fashion. The protein is Phytochrome B (PHYB) of Sorghum bicolor (Sorghum).